We begin with the raw amino-acid sequence, 152 residues long: Small ribosomal subunit protein bS6 (152 aa).

This sequence belongs to the bacterial ribosomal protein bS6 family.

Its function is as follows. Binds together with bS18 to 16S ribosomal RNA. The chain is Small ribosomal subunit protein bS6 from Bdellovibrio bacteriovorus (strain ATCC 15356 / DSM 50701 / NCIMB 9529 / HD100).